A 178-amino-acid polypeptide reads, in one-letter code: Stathmin-2-A (178 aa).

Positions 38-178 constitute an SLD domain; it reads DDMEIKQLNK…RNKEQLELSG (141 aa). Positions 75-178 form a coiled coil; that stretch reads KKKDVSLGEI…RNKEQLELSG (104 aa).

Belongs to the stathmin family. Nervous tissue.

The protein resides in the cytoplasm. The protein localises to the membrane. It localises to the cell projection. Its subcellular location is the lamellipodium. This Xenopus laevis (African clawed frog) protein is Stathmin-2-A (stmn2-a).